The sequence spans 351 residues: UDP-3-O-acylglucosamine N-acyltransferase (351 aa).

Catalysis depends on His240, which acts as the Proton acceptor.

The protein belongs to the transferase hexapeptide repeat family. LpxD subfamily. As to quaternary structure, homotrimer.

The enzyme catalyses a UDP-3-O-[(3R)-3-hydroxyacyl]-alpha-D-glucosamine + a (3R)-hydroxyacyl-[ACP] = a UDP-2-N,3-O-bis[(3R)-3-hydroxyacyl]-alpha-D-glucosamine + holo-[ACP] + H(+). The protein operates within bacterial outer membrane biogenesis; LPS lipid A biosynthesis. Its function is as follows. Catalyzes the N-acylation of UDP-3-O-acylglucosamine using 3-hydroxyacyl-ACP as the acyl donor. Is involved in the biosynthesis of lipid A, a phosphorylated glycolipid that anchors the lipopolysaccharide to the outer membrane of the cell. The sequence is that of UDP-3-O-acylglucosamine N-acyltransferase from Pseudomonas fluorescens (strain ATCC BAA-477 / NRRL B-23932 / Pf-5).